The chain runs to 33 residues: Dermaseptin-H6 (33 aa).

Leucine amide is present on Leu-33.

As to expression, expressed by the skin glands.

It is found in the secreted. Functionally, has antimicrobial activity. This is Dermaseptin-H6 from Pithecopus hypochondrialis (Orange-legged leaf frog).